Reading from the N-terminus, the 246-residue chain is DNA polymerase sliding clamp 3 (246 aa).

It belongs to the PCNA family. In terms of assembly, the subunits circularize to form a toroid; DNA passes through its center. Replication factor C (RFC) is required to load the toroid on the DNA. Forms dimeric complexes with PCNA1 and PCNA2, and trimeric complexes with PCNA123 and PCNA323; does not form homotrimers. Crystal structures show a heterotetramer of 2 PCNA2 and 2 PCNA3, which would be large enough to clamp a Holliday junction.

Its function is as follows. Sliding clamp subunit that acts as a moving platform for DNA processing. Responsible for tethering the catalytic subunit of DNA polymerase and other proteins to DNA during high-speed replication. Both trimeric complexes inhibit DNA ligase and both 3'-5' and 5'-3' activity of Hel308 (Hjm) helicase, but stimulate Hjc, the Holliday junction cleavage enzyme. This Sulfurisphaera tokodaii (strain DSM 16993 / JCM 10545 / NBRC 100140 / 7) (Sulfolobus tokodaii) protein is DNA polymerase sliding clamp 3.